A 389-amino-acid chain; its full sequence is MSEVTTQSKPERRKRQKLEDMEGYKPSIYGLTRDELIDWAVEHGEKKFRATQIWDWLYKKRVQSFEEMTNISKDFIAKLNDNFCVNPLKQRIVQESKDGTVKYLFELPDGMLIETVLMRQHYGLSVCVTTQVGCNIGCTFCASGLIKKQRDLTAGEIVAQIMLVQKYFDDRGDGERVSHVVVMGIGEPFDNYDNVLRFLRTINNDNGLAIGARHITVSTSGLAPKIKEFANEGVQVNLAVSLHAPNNDLRSSIMRINRSFPLEKLFEAIEYYIQTTNRRVTFEYIMLNEVNDHPENAQELADLTKKIRKLSYINLIPYNPVSEHDHYSRSTKERVAAFYDVLKKNGVNCVVRQEHGTDIDAACGQLRSNTMKRDRQKAVAEASGKSEGK.

E114 functions as the Proton acceptor in the catalytic mechanism. Residues 120-358 (QHYGLSVCVT…CVVRQEHGTD (239 aa)) form the Radical SAM core domain. A disulfide bridge links C127 with C363. Positions 134, 138, and 141 each coordinate [4Fe-4S] cluster. S-adenosyl-L-methionine contacts are provided by residues 186–187 (GE), S218, 241–243 (SLH), and N319. The active-site S-methylcysteine intermediate is C363. The disordered stretch occupies residues 370-389 (TMKRDRQKAVAEASGKSEGK). Residues 371–389 (MKRDRQKAVAEASGKSEGK) show a composition bias toward basic and acidic residues.

The protein belongs to the radical SAM superfamily. RlmN family. It depends on [4Fe-4S] cluster as a cofactor.

It localises to the cytoplasm. The enzyme catalyses adenosine(2503) in 23S rRNA + 2 reduced [2Fe-2S]-[ferredoxin] + 2 S-adenosyl-L-methionine = 2-methyladenosine(2503) in 23S rRNA + 5'-deoxyadenosine + L-methionine + 2 oxidized [2Fe-2S]-[ferredoxin] + S-adenosyl-L-homocysteine. It catalyses the reaction adenosine(37) in tRNA + 2 reduced [2Fe-2S]-[ferredoxin] + 2 S-adenosyl-L-methionine = 2-methyladenosine(37) in tRNA + 5'-deoxyadenosine + L-methionine + 2 oxidized [2Fe-2S]-[ferredoxin] + S-adenosyl-L-homocysteine. In terms of biological role, specifically methylates position 2 of adenine 2503 in 23S rRNA and position 2 of adenine 37 in tRNAs. The polypeptide is Probable dual-specificity RNA methyltransferase RlmN (Streptococcus thermophilus (strain CNRZ 1066)).